We begin with the raw amino-acid sequence, 376 residues long: DNA methyltransferase CcrM (376 aa).

The RAMA domain maps to 273–370 (KATLSVMTGK…IDELRSVIRN (98 aa)).

It belongs to the N(4)/N(6)-methyltransferase family.

The enzyme catalyses a 2'-deoxyadenosine in DNA + S-adenosyl-L-methionine = an N(6)-methyl-2'-deoxyadenosine in DNA + S-adenosyl-L-homocysteine + H(+). Its function is as follows. A beta subtype methylase that recognizes the double-stranded sequence 5'-GANTC-3' and methylates A-2 on both strands. Overexpression leads to many branched and bloated cells, two to three times the size of wild-type cells, and cells that have 1-3 times the normal amount of DNA. Contributes to the accurate cell-cycle control of DNA replication and cellular morphology. Can fully replace its ortholog in C.crescentus. The chain is DNA methyltransferase CcrM (smeIM) from Rhizobium meliloti (strain 1021) (Ensifer meliloti).